A 256-amino-acid polypeptide reads, in one-letter code: MNNIWWQTKGQGNVHLVLLHGWGLNAEVWRCIDEELSSHFTLHLVDLPGFGRSRGFGAMSLADMAEAVLRQAPDKAIWLGWSLGGLVASQIALTHPERVQALVTVASSPCFSARDEWLGIKPDVLAGFQQQLSDDFQRTVERFLALQTMGTETARQDARALKKTVLALPMPEVDVLNGGLEILKTVDLRQPLQNVSMPFLRLYGYLDGLVPRKVVPMLDKLWPHSESYIFAKAAHAPFISHPVEFRHVLVALKQRV.

Residues 15–242 (HLVLLHGWGL…AAHAPFISHP (228 aa)) enclose the AB hydrolase-1 domain. Substrate-binding positions include Trp-22, 82 to 83 (SL), and 143 to 147 (FLALQ). Ser-82 acts as the Nucleophile in catalysis. Residues Asp-207 and His-235 contribute to the active site. Residue His-235 participates in substrate binding.

The protein belongs to the AB hydrolase superfamily. Carboxylesterase BioH family. Monomer.

The protein resides in the cytoplasm. The enzyme catalyses 6-carboxyhexanoyl-[ACP] methyl ester + H2O = 6-carboxyhexanoyl-[ACP] + methanol + H(+). It functions in the pathway cofactor biosynthesis; biotin biosynthesis. Functionally, the physiological role of BioH is to remove the methyl group introduced by BioC when the pimeloyl moiety is complete. It allows to synthesize pimeloyl-ACP via the fatty acid synthetic pathway through the hydrolysis of the ester bonds of pimeloyl-ACP esters. In Shigella dysenteriae serotype 1 (strain Sd197), this protein is Pimeloyl-[acyl-carrier protein] methyl ester esterase.